A 286-amino-acid chain; its full sequence is Dioxygenase trt7 (286 aa).

3 residues coordinate Fe cation: H129, D131, and H206.

It belongs to the PhyH family. As to quaternary structure, homodimer. Requires Fe cation as cofactor.

Its pathway is secondary metabolite biosynthesis; terpenoid biosynthesis. Dioxygenase; part of the gene cluster that mediates the biosynthesis of terretonin, a fungal meroterpenoid that acts as a mycotoxin. The first step of the pathway is the synthesis of 3,5-dimethylorsellinic acid (DMOA) by the polyketide synthase trt4. DMOA is then prenylated into farnesyl-DMOA by the polyprenyl transferase trt2. Methylation by the methyltransferase trt5 then leads to farnesyl-DMOA methyl ester which is further subject to epoxidation by the FAD-dependent monooxygenase trt8 to yield epoxyfarnesyl-DMOA methyl ester. Cyclization of epoxyfarnesyl-DMOA methyl ester by the terpene cyclase trt1 leads to a tetracycle intermediate which is in turn converted to preterretonin. Dehydrogenase trt9 comes next to transform preterretonin to preterrenoid. The FAD-dependent monooxygenase trt3 is then required for the C-hydroxylation at C16 of preterrenoid to yield terrenoid. The cytochrome P450 trt6 catalyzes three successive oxidations to transform terrenoid into an unstable intermediate, which then undergoes the D-ring expansion and unusual rearrangement of the methoxy group to afford the core skeleton of terretonin. Trt14 catalyzes the D-ring expansion of terretonin involving intramolecular methoxy rearrangement as well as the hydrolysis of the expanded D-ring and the methyl ester moiety. Finally, the nonheme iron-dependent dioxygenase trt7 accomplishes the last two oxidation reactions steps to complete the biosynthesis of terretonin. Terretonin C is produced via spontaneous decarboxylation of the terretonin precursor. Another shunt product of the terretonin biosynthesis is dihydrofarnesyl-DMOA, derived from epoxyfarnesyl-DMOA through hydrolysis of the epoxide. In Aspergillus terreus (strain NIH 2624 / FGSC A1156), this protein is Dioxygenase trt7.